Here is an 81-residue protein sequence, read N- to C-terminus: CLAVATA3/ESR (CLE)-related protein 6 (81 aa).

Residues 1-26 (MANLILKQSLIILLIIYSTPILSSQA) form the signal peptide. 2 positions are modified to hydroxyproline: Pro73 and Pro76. Pro76 carries O-linked (Ara...) hydroxyproline glycosylation.

This sequence belongs to the CLV3/ESR signal peptide family. In terms of processing, the O-glycosylation (arabinosylation) of the hydroxyproline Pro-76 enhances binding affinity of the CLE6p peptide for its receptor. As to expression, mostly expressed in roots, seedlings, stems and flowers, and, to a lower extent, in apex and siliques.

Its subcellular location is the secreted. The protein localises to the extracellular space. Extracellular signal peptide that regulates cell fate. The polypeptide is CLAVATA3/ESR (CLE)-related protein 6 (Arabidopsis thaliana (Mouse-ear cress)).